A 1472-amino-acid polypeptide reads, in one-letter code: Vacuolar cation-transporting ATPase YPK9 (1472 aa).

At methionine 1 the chain carries N-acetylmethionine. 2 stretches are compositionally biased toward polar residues: residues 1-12 (MDIPSSNQIQHG) and 72-87 (SFQS…SGNL). Disordered stretches follow at residues 1 to 32 (MDIP…TATT), 71 to 115 (HSFQ…SRNP), and 179 to 273 (AKSY…DDVH). The Cytoplasmic segment spans residues 1 to 293 (MDIPSSNQIQ…YHEKFYPQYA (293 aa)). Threonine 95 is modified (phosphothreonine). 2 stretches are compositionally biased toward low complexity: residues 103–115 (SSAE…SRNP) and 211–222 (SATHSSSSLSRY). Serine 108 is modified (phosphoserine). Residues 234-243 (SQTDEILEDE) show a composition bias toward acidic residues. Residues 294–315 (PNLHYQRFYIAEEDLVIGIAAY) traverse the membrane as a helical segment. Topologically, residues 316–321 (QTSKFW) are vacuolar. The chain crosses the membrane as a helical span at residues 322–344 (YIIYNLCCFLTFGLVYLLTRWLP). Residues 345–488 (HLKVKLYGVK…INLRMKTTSE (144 aa)) are Cytoplasmic-facing. Residues 489-511 (ILFNEVLHPFYVFQVFSIILWGI) traverse the membrane as a helical segment. Residues 512 to 514 (DEY) lie on the Vacuolar side of the membrane. The chain crosses the membrane as a helical span at residues 515–533 (YYYAACIFLISVLSIFDSL). The Cytoplasmic portion of the chain corresponds to 534 to 693 (NEQKKVSRNL…PTGFKFYRDS (160 aa)). The chain crosses the membrane as a helical span at residues 694-713 (FKYIGFMSLIAIFGFCVSCV). Over 714–726 (QFIKLGLDKKTMI) the chain is Vacuolar. Residues 727–748 (LRALDIITIVVPPALPATLTIG) form a helical membrane-spanning segment. The Cytoplasmic portion of the chain corresponds to 749-1244 (TNFALSRLKE…ALVTSFACFQ (496 aa)). Aspartate 781 (4-aspartylphosphate intermediate) is an active-site residue. A phosphoserine mark is found at serine 1117 and serine 1120. Positions 1187 and 1191 each coordinate Mg(2+). Residues 1245-1264 (YMSLYSAIQFITITILYSRG) traverse the membrane as a helical segment. Residues 1265–1271 (SNLGDFQ) lie on the Vacuolar side of the membrane. A helical membrane pass occupies residues 1272 to 1289 (FLYIDLLLIVPIAICMSW). The Cytoplasmic portion of the chain corresponds to 1290–1307 (SKSYEKIDKKRPSANLVS). The helical transmembrane segment at 1308–1331 (PKILVPLLISVFLVFLFQFIPWII) threads the bilayer. Residues 1332 to 1351 (VQKMSWYIKPIVGGDDAVQS) are Vacuolar-facing. A helical membrane pass occupies residues 1352 to 1374 (SDNTVLFFVSNFQYILTAIVLSV). Topologically, residues 1375-1387 (GPPYREPMSKNFE) are cytoplasmic. Residues 1388-1407 (FIVDITVSIGASLLLMTLDT) form a helical membrane-spanning segment. The Vacuolar portion of the chain corresponds to 1408–1423 (ESYLGKMLQLTPISNS). The chain crosses the membrane as a helical span at residues 1424–1446 (FTMFIIVWVILNYYAQLYIPPSI). At 1447–1472 (KGWLKKKKSSKKYKLLIQEEMKLKEV) the chain is on the cytoplasmic side.

Belongs to the cation transport ATPase (P-type) (TC 3.A.3) family. Type V subfamily.

Its subcellular location is the vacuole membrane. It carries out the reaction ATP + H2O = ADP + phosphate + H(+). In terms of biological role, vacuolar transporter which plays a role in sequestration of divalent heavy metal ions. This chain is Vacuolar cation-transporting ATPase YPK9 (YPK9), found in Saccharomyces cerevisiae (strain ATCC 204508 / S288c) (Baker's yeast).